Here is a 378-residue protein sequence, read N- to C-terminus: MDSLAAPQDRLVEQLLSPRTQAQRRLKDIDKQYVGFATLPNQVHRKSVKKGFDFTLMVAGESGLGKSTLVHSLFLTDLYKDRKLLSAEERISQTVEILKHTVDIEEKGVKLKLTIVDTPGFGDAVDNTECWKPITDYVDQQFEQYFRDESGLNRKNIQDNRVHCCLYFISPFGHGLRPVDVGFMKALHEKVNIVPLIAKADCLVPSEIRKLKERIREEIDKFGIHVYQFPECDSDEDEDFKQQDRELKESAPFAVIGSNTVVEAKGQRVRGRLYPWGIVEVENQAHCDFVKLRNMLIRTHMHDLKDVTCDVHYENYRAHCIQQMTSKLTQDSRMESPIPILPLPTPDAETEKLIRMKDEELRRMQEMLQRMKQQMQDQ.

The Septin-type G domain maps to 50–323 (KGFDFTLMVA…ENYRAHCIQQ (274 aa)). The interval 60-67 (GESGLGKS) is G1 motif. Residues 60-67 (GESGLGKS), Thr-94, and Gly-120 each bind GTP. Positions 117-120 (DTPG) are G3 motif. Arg-177 carries the post-translational modification Omega-N-methylarginine. The segment at 198–201 (AKAD) is G4 motif. 199–207 (KADCLVPSE) contacts GTP. Ser-234 carries the post-translational modification Phosphoserine. Positions 257 and 272 each coordinate GTP. At Ser-336 the chain carries Phosphoserine. Phosphothreonine is present on Thr-345. Residues 347 to 378 (DAETEKLIRMKDEELRRMQEMLQRMKQQMQDQ) adopt a coiled-coil conformation.

This sequence belongs to the TRAFAC class TrmE-Era-EngA-EngB-Septin-like GTPase superfamily. Septin GTPase family. As to quaternary structure, septins polymerize into heterooligomeric protein complexes that form filaments, and can associate with cellular membranes, actin filaments and microtubules. GTPase activity is required for filament formation. Interacts with SEPTIN2 and SEPTIN5. In platelets, associated with a complex containing STX4. Interacts with PRKN; this interaction leads to SEPTIN5 ubiquitination and degradation. Interacts with DYRK1A. Interacts with STX1A; in the cerebellar cortex. Phosphorylated by DYRK1A.

The protein localises to the cytoplasm. It is found in the cytoskeleton. Filament-forming cytoskeletal GTPase. May play a role in cytokinesis (Potential). May play a role in platelet secretion. The protein is Septin-5 of Macaca fascicularis (Crab-eating macaque).